Consider the following 538-residue polypeptide: MQQFTIRTRLLMLVGAMFIGFITIELMGFSALQRGVASLNTVYLDRVVPLRDLKTIADLYAVKIVDSSHKARSGRMTYAQAEQEVKDAGRQIDMLWHAYQKTKKIDEEQRSVDALAKLVDEAQDPIERLKGILERGDKAALDTFVENEMYPLIDPLSEGLSHLTQIQVEESKRAYDAAVVLYDSSRTMLALLLLGILICGGVFATRLIRSIIHPLTTLKDAAARVALGDLSQSIQVSGRNEVTDVQQSVQAMQANLRNTLQDIQGSAAQLAAAAEELQTATESTAQGIHRQNDEMQMAATAVTEMSAAVDEVADNANRTSNASHEAMDLADGGRKQVMLTRETIDRLSGKLNETTRTVFRLAEEASNIGRVLDVIRAIAEQTKLLALNAAIEAAHAGEAGRGFAVVADEVRNLAQRTQTSTQEIERMISAIQSVTQEGVRDVQQSCEFAARSQTMSSEADQALTLIAERITEINGMNLVIASAAEEQAQVAREVDRNLVAISDISEQSTAGVQQTSEASEELARLAANLNNLVNRFSM.

Over 1 to 9 the chain is Cytoplasmic; sequence MQQFTIRTR. Residues 10–30 form a helical membrane-spanning segment; sequence LLMLVGAMFIGFITIELMGFS. Residues 31–187 are Periplasmic-facing; sequence ALQRGVASLN…AVVLYDSSRT (157 aa). A helical transmembrane segment spans residues 188–208; the sequence is MLALLLLGILICGGVFATRLI. The 53-residue stretch at 209-261 folds into the HAMP domain; that stretch reads RSIIHPLTTLKDAAARVALGDLSQSIQVSGRNEVTDVQQSVQAMQANLRNTLQ. The Cytoplasmic portion of the chain corresponds to 209 to 538; sequence RSIIHPLTTL…LNNLVNRFSM (330 aa). A Methyl-accepting transducer domain is found at 266–502; the sequence is SAAQLAAAAE…EVDRNLVAIS (237 aa).

The protein belongs to the methyl-accepting chemotaxis (MCP) protein family.

The protein localises to the cell inner membrane. Its function is as follows. Chemotactic-signal transducers respond to changes in the concentration of attractants and repellents in the environment, transduce a signal from the outside to the inside of the cell, and facilitate sensory adaptation through the variation of the level of methylation. Chemoreceptor for naphthalene or a related compound. May facilitate biodegradation. The polypeptide is Methyl-accepting chemotaxis protein NahY (nahY) (Pseudomonas putida (Arthrobacter siderocapsulatus)).